The chain runs to 79 residues: Beta-defensin 130 (79 aa).

An N-terminal signal peptide occupies residues 1-22; that stretch reads MKLHSLISVLLLFVTLIPKGKT. 2 disulfide bridges follow: Cys-38/Cys-53 and Cys-43/Cys-60.

This sequence belongs to the beta-defensin family.

Its subcellular location is the secreted. Its function is as follows. Antimicrobial host-defense peptide. In Pan troglodytes (Chimpanzee), this protein is Beta-defensin 130.